The primary structure comprises 910 residues: Protein translocase subunit SecA (910 aa).

Residues glutamine 89, 107-111 (GEGKT), and aspartate 496 contribute to the ATP site. Residues 873–910 (QEFSGGNLNRSQSNGSSVTVTTSSGGGTERKTSRRRKR) form a disordered region. The segment covering 876-886 (SGGNLNRSQSN) has biased composition (polar residues).

The protein belongs to the SecA family. Monomer and homodimer. Part of the essential Sec protein translocation apparatus which comprises SecA, SecYEG and auxiliary proteins SecDF. Other proteins may also be involved.

It is found in the cell inner membrane. The protein resides in the cytoplasm. The catalysed reaction is ATP + H2O + cellular proteinSide 1 = ADP + phosphate + cellular proteinSide 2.. In terms of biological role, part of the Sec protein translocase complex. Interacts with the SecYEG preprotein conducting channel. Has a central role in coupling the hydrolysis of ATP to the transfer of proteins into and across the cell membrane, serving as an ATP-driven molecular motor driving the stepwise translocation of polypeptide chains across the membrane. The sequence is that of Protein translocase subunit SecA from Leptospira interrogans serogroup Icterohaemorrhagiae serovar copenhageni (strain Fiocruz L1-130).